Consider the following 271-residue polypeptide: Nus factor SuhB (271 aa).

Mg(2+) is bound by residues Glu67, Asp86, and Leu88. Substrate is bound at residue Glu67. Substrate is bound by residues 88–91 (LDGT), Arg187, and Asp216.

It belongs to the inositol monophosphatase superfamily. In terms of assembly, homodimer. The rRNA transcription and antitermination complex (rrnTAC) consists of RNA polymerase (RNAP), NusA, NusB, NusE (rpsJ), NusG, SubB, ribosomal protein S4, DNA and precursor rRNA; S4 is more flexible than other subunits. Interacts with the ribosome and with RNA polymerase. It depends on Mg(2+) as a cofactor.

It localises to the cytoplasm. It catalyses the reaction a myo-inositol phosphate + H2O = myo-inositol + phosphate. Functionally, part of the processive rRNA transcription and antitermination complex (rrnTAC). The complex forms an RNA-chaperone ring around the RNA exit tunnel of RNA polymerase (RNAP). It supports rapid transcription and antitermination of rRNA operons, cotranscriptional rRNA folding, and annealing of distal rRNA regions to allow correct ribosome biogenesis. This subunit may play a central role in organizing the structure. A ribosome-associated protein, deletion of which alters the expression of 494 genes, suggesting a role in global gene regulation. Involved in control of pathogenesis-related genes. Required for the activation of virulence factors associated with acute infections (type 3 secretion system, T3SS) while suppressing virulence factors associated with chronic infections (biofilm formation and type 6 secretion system, T6SS). It probably acts at a post-transcriptional level. The sequence is that of Nus factor SuhB from Pseudomonas aeruginosa (strain ATCC 15692 / DSM 22644 / CIP 104116 / JCM 14847 / LMG 12228 / 1C / PRS 101 / PAO1).